The following is an 803-amino-acid chain: Elongation factor G, mitochondrial (803 aa).

A mitochondrion-targeting transit peptide spans 1–24 (MVRPAQVRAFSGLARSATSTRLIP). One can recognise a tr-type G domain in the interval 102-388 (SKVRNIGIAA…GVCDYLPNPS (287 aa)). Residues 111–118 (AHIDSGKT), 186–190 (DTPGH), and 240–243 (NKMD) contribute to the GTP site.

This sequence belongs to the TRAFAC class translation factor GTPase superfamily. Classic translation factor GTPase family. EF-G/EF-2 subfamily.

It is found in the mitochondrion. It functions in the pathway protein biosynthesis; polypeptide chain elongation. Its function is as follows. Mitochondrial GTPase that catalyzes the GTP-dependent ribosomal translocation step during translation elongation. During this step, the ribosome changes from the pre-translocational (PRE) to the post-translocational (POST) state as the newly formed A-site-bound peptidyl-tRNA and P-site-bound deacylated tRNA move to the P and E sites, respectively. Catalyzes the coordinated movement of the two tRNA molecules, the mRNA and conformational changes in the ribosome. This chain is Elongation factor G, mitochondrial (mef1), found in Talaromyces marneffei (strain ATCC 18224 / CBS 334.59 / QM 7333) (Penicillium marneffei).